A 1072-amino-acid polypeptide reads, in one-letter code: 5'-3' exoribonuclease 2 (1072 aa).

A coiled-coil region spans residues 118-144 (RRFRAAREAMEKEEDKQKFVELLKKQN). Residues 269 to 286 (RLCKICGQKGHDAMNCKG) form a CCHC-type zinc finger. Positions 414–435 (KETEDRREAGFKRRKLADEARQ) are enriched in basic and acidic residues. 4 disordered regions span residues 414–459 (KETE…GFSF), 509–577 (QGTS…AEPT), 865–911 (ASRS…GGGG), and 943–1072 (GGGY…RGYR). Over residues 518-543 (AESTETPAETAAAAPATEEQAAPPAA) the composition is skewed to low complexity. The segment covering 892–911 (GPGGGQQGGRGRGGYQGGGG) has biased composition (gly residues). Pro residues predominate over residues 955-967 (GPPPGWQPPPPPG). Gly residues-rich tracts occupy residues 983 to 1000 (AYGG…GSSR), 1025 to 1036 (YGQGGSRGGYQG), and 1056 to 1072 (GYRG…RGYR).

The protein belongs to the 5'-3' exonuclease family. XRN2/RAT1 subfamily. Interacts with rai1; the interaction is direct, stabilizes exr-1 protein structure and may stimulate its exoribonuclease activity. The interaction also stimulates rai1 pyrophosphohydrolase activity, probably by recruiting it to mRNA substrates.

It is found in the nucleus. Functionally, possesses 5'-&gt;3' exoribonuclease activity. Required for the processing of nuclear mRNA and rRNA precursors. May promote the termination of transcription by RNA polymerase II. Essential for vegetative cell growth and chromosome segregation. This Neurospora crassa (strain ATCC 24698 / 74-OR23-1A / CBS 708.71 / DSM 1257 / FGSC 987) protein is 5'-3' exoribonuclease 2 (exr-1).